The following is a 427-amino-acid chain: MLDIKWIRENPEALDAALAKRGAEPLAQNLVALDEKRRSAVQKAQDLLSRRNLASKEIGAALSQKNGELAEKLKVEVAELKAMLPAVEEEDRQLTAELNDALSRIPNIPFDDVPVGKDEHDNVVTRTVGEKPRWNHTPKEHFEIGEALGYMDFERAAKLSGSRFTVLTGPLARLERALGQFMIDLHTREHGYTEVSSPLMVRAEALFGTGNLPKFEEDLFKTTDGRYLIPTAEVTLTNLVREEILDQEKLPLRFTALTPSFRSEAGSAGRDTRGMLRQHQFWKCELVSITDAESAVAEHERMTACAEDVLKRLGLHFRTMTLCTGDMGFGSRKTYDLEVWLPGQNAFREISSCSVCGDFQARRMNARYRGKDDKSNRFVHTLNGSGTAVGRCLIAVLENYLNEDGSVTIPDVLLPYMGGLTKIERAA.

231-233 lines the L-serine pocket; it reads TAE. 262–264 contacts ATP; it reads RSE. Residue glutamate 285 participates in L-serine binding. 349–352 is a binding site for ATP; that stretch reads EISS. L-serine is bound at residue serine 385.

It belongs to the class-II aminoacyl-tRNA synthetase family. Type-1 seryl-tRNA synthetase subfamily. As to quaternary structure, homodimer. The tRNA molecule binds across the dimer.

It is found in the cytoplasm. The enzyme catalyses tRNA(Ser) + L-serine + ATP = L-seryl-tRNA(Ser) + AMP + diphosphate + H(+). It catalyses the reaction tRNA(Sec) + L-serine + ATP = L-seryl-tRNA(Sec) + AMP + diphosphate + H(+). It participates in aminoacyl-tRNA biosynthesis; selenocysteinyl-tRNA(Sec) biosynthesis; L-seryl-tRNA(Sec) from L-serine and tRNA(Sec): step 1/1. Its function is as follows. Catalyzes the attachment of serine to tRNA(Ser). Is also able to aminoacylate tRNA(Sec) with serine, to form the misacylated tRNA L-seryl-tRNA(Sec), which will be further converted into selenocysteinyl-tRNA(Sec). This Rhizobium leguminosarum bv. trifolii (strain WSM2304) protein is Serine--tRNA ligase.